The primary structure comprises 122 residues: Large ribosomal subunit protein bL12 (122 aa).

It belongs to the bacterial ribosomal protein bL12 family. Homodimer. Part of the ribosomal stalk of the 50S ribosomal subunit. Forms a multimeric L10(L12)X complex, where L10 forms an elongated spine to which 2 to 4 L12 dimers bind in a sequential fashion. Binds GTP-bound translation factors.

Functionally, forms part of the ribosomal stalk which helps the ribosome interact with GTP-bound translation factors. Is thus essential for accurate translation. This chain is Large ribosomal subunit protein bL12, found in Blochmanniella pennsylvanica (strain BPEN).